A 333-amino-acid chain; its full sequence is Ribosomal RNA small subunit methyltransferase C (333 aa).

This sequence belongs to the methyltransferase superfamily. RsmC family. Monomer.

It localises to the cytoplasm. The catalysed reaction is guanosine(1207) in 16S rRNA + S-adenosyl-L-methionine = N(2)-methylguanosine(1207) in 16S rRNA + S-adenosyl-L-homocysteine + H(+). Specifically methylates the guanine in position 1207 of 16S rRNA in the 30S particle. The protein is Ribosomal RNA small subunit methyltransferase C of Actinobacillus succinogenes (strain ATCC 55618 / DSM 22257 / CCUG 43843 / 130Z).